The chain runs to 408 residues: UDP-N-acetylglucosamine--N-acetylmuramyl-(pentapeptide) pyrophosphoryl-undecaprenol N-acetylglucosamine transferase (408 aa).

Residues 1-20 form a disordered region; sequence MNDTVKKPTGGRGDDPLPAG. Residues 41–43, Asn160, Arg197, Ser231, and Gln327 contribute to the UDP-N-acetyl-alpha-D-glucosamine site; that span reads TAG.

The protein belongs to the glycosyltransferase 28 family. MurG subfamily.

Its subcellular location is the cell membrane. The enzyme catalyses di-trans,octa-cis-undecaprenyl diphospho-N-acetyl-alpha-D-muramoyl-L-alanyl-D-glutamyl-meso-2,6-diaminopimeloyl-D-alanyl-D-alanine + UDP-N-acetyl-alpha-D-glucosamine = di-trans,octa-cis-undecaprenyl diphospho-[N-acetyl-alpha-D-glucosaminyl-(1-&gt;4)]-N-acetyl-alpha-D-muramoyl-L-alanyl-D-glutamyl-meso-2,6-diaminopimeloyl-D-alanyl-D-alanine + UDP + H(+). It functions in the pathway cell wall biogenesis; peptidoglycan biosynthesis. In terms of biological role, cell wall formation. Catalyzes the transfer of a GlcNAc subunit on undecaprenyl-pyrophosphoryl-MurNAc-pentapeptide (lipid intermediate I) to form undecaprenyl-pyrophosphoryl-MurNAc-(pentapeptide)GlcNAc (lipid intermediate II). The polypeptide is UDP-N-acetylglucosamine--N-acetylmuramyl-(pentapeptide) pyrophosphoryl-undecaprenol N-acetylglucosamine transferase (Mycobacterium avium (strain 104)).